A 54-amino-acid polypeptide reads, in one-letter code: UPF0235 protein in proC 3'region (54 aa).

The protein belongs to the UPF0235 family.

The chain is UPF0235 protein in proC 3'region from Vibrio alginolyticus.